A 142-amino-acid polypeptide reads, in one-letter code: Large ribosomal subunit protein uL16 (142 aa).

The protein belongs to the universal ribosomal protein uL16 family. As to quaternary structure, part of the 50S ribosomal subunit.

Functionally, binds 23S rRNA and is also seen to make contacts with the A and possibly P site tRNAs. This is Large ribosomal subunit protein uL16 from Phenylobacterium zucineum (strain HLK1).